The sequence spans 257 residues: DNA repair protein RecO (257 aa).

Belongs to the RecO family.

Involved in DNA repair and RecF pathway recombination. The polypeptide is DNA repair protein RecO (Clostridium kluyveri (strain ATCC 8527 / DSM 555 / NBRC 12016 / NCIMB 10680 / K1)).